The following is an 88-amino-acid chain: Centromere protein W (88 aa).

It belongs to the CENP-W/WIP1 family. Heterodimer with CENPT; this dimer coassembles with CENPS-CENPX heterodimers at centromeres to form the tetrameric CENP-T-W-S-X complex, which is a subcomplex of the large constitutive centromere-associated network (CCAN, also known as the interphase centromere complex or ICEN). Interacts with NPM1. Highly expressed in ovary, liver, lung and pancreas and to a lower extent in breast and gastrointestinal tract cancers; such as those of the colon, rectum and stomach. Overexpressed in high grade breast invasive tumors. Expressed in many cancer cell types.

The protein resides in the nucleus. It is found in the chromosome. The protein localises to the centromere. It localises to the kinetochore. Its subcellular location is the nucleus matrix. The protein resides in the nucleolus. Component of the CENPA-NAC (nucleosome-associated) complex, a complex that plays a central role in assembly of kinetochore proteins, mitotic progression and chromosome segregation. The CENPA-NAC complex recruits the CENPA-CAD (nucleosome distal) complex and may be involved in incorporation of newly synthesized CENPA into centromeres. Part of a nucleosome-associated complex that binds specifically to histone H3-containing nucleosomes at the centromere, as opposed to nucleosomes containing CENPA. Component of the heterotetrameric CENP-T-W-S-X complex that binds and supercoils DNA, and plays an important role in kinetochore assembly. CENPW has a fundamental role in kinetochore assembly and function. It is one of the inner kinetochore proteins, with most further proteins binding downstream. Required for normal chromosome organization and normal progress through mitosis. The chain is Centromere protein W (CENPW) from Homo sapiens (Human).